We begin with the raw amino-acid sequence, 98 residues long: Protein translation factor SUI1 homolog (98 aa).

Belongs to the SUI1 family.

The chain is Protein translation factor SUI1 homolog from Pyrococcus abyssi (strain GE5 / Orsay).